Reading from the N-terminus, the 472-residue chain is DNA-cytosine methyltransferase (472 aa).

Positions 87 to 457 (FRFIDLFAGI…KLLEPKIKQA (371 aa)) constitute an SAM-dependent MTase C5-type domain. Residue Cys-177 is part of the active site.

It belongs to the class I-like SAM-binding methyltransferase superfamily. C5-methyltransferase family.

The catalysed reaction is a 2'-deoxycytidine in DNA + S-adenosyl-L-methionine = a 5-methyl-2'-deoxycytidine in DNA + S-adenosyl-L-homocysteine + H(+). Its function is as follows. This methylase recognizes the double-stranded sequence 5'-CCWGG-3', methylates C-2 on both strands. In Escherichia coli O157:H7, this protein is DNA-cytosine methyltransferase (dcm).